A 959-amino-acid chain; its full sequence is DNA polymerase 1 (959 aa).

The disordered stretch occupies residues 1 to 110 (MRVRGGQEAA…LTLEPSPQSE (110 aa)). The span at 44–60 (KKPEPPPTLHREREPES) shows a compositional bias: basic and acidic residues.

Belongs to the DNA polymerase type-B family.

The enzyme catalyses DNA(n) + a 2'-deoxyribonucleoside 5'-triphosphate = DNA(n+1) + diphosphate. The chain is DNA polymerase 1 (polA) from Aeropyrum pernix (strain ATCC 700893 / DSM 11879 / JCM 9820 / NBRC 100138 / K1).